The chain runs to 79 residues: Small ribosomal subunit protein uS17 (79 aa).

It belongs to the universal ribosomal protein uS17 family. In terms of assembly, part of the 30S ribosomal subunit.

One of the primary rRNA binding proteins, it binds specifically to the 5'-end of 16S ribosomal RNA. The polypeptide is Small ribosomal subunit protein uS17 (Roseobacter denitrificans (strain ATCC 33942 / OCh 114) (Erythrobacter sp. (strain OCh 114))).